Here is a 147-residue protein sequence, read N- to C-terminus: MRKLVIPKYYGRPSIGLALFGCTNRPFYHVCVFPDRALGRRYEGNILEQVGTFDPLPNQKNEKLVALNFGRLKYWIGERNAHISVPVLELLGLSGLFPIHPKSFIRAKDNRALIADQQLKVAAEAAEAEKVAQEQASTGAAATSHPQ.

Belongs to the bacterial ribosomal protein bS16 family. Component of the mitochondrial ribosome small subunit (28S) which comprises a 12S rRNA and about 30 distinct proteins.

The protein resides in the mitochondrion. This chain is Small ribosomal subunit protein bS16m (mrps-16), found in Caenorhabditis elegans.